We begin with the raw amino-acid sequence, 344 residues long: Centromere protein L (344 aa).

At serine 39 the chain carries Phosphoserine. A Phosphothreonine modification is found at threonine 43. Serine 53 is subject to Phosphoserine.

Belongs to the CENP-L/IML3 family. Component of the CENPA-CAD complex, composed of CENPI, CENPK, CENPL, CENPO, CENPP, CENPQ, CENPR and CENPS. The CENPA-CAD complex interacts with the CENPA-NAC complex, at least composed of CENPA, CENPC, CENPH, CENPM, CENPN, CENPT and CENPU.

The protein resides in the nucleus. It is found in the chromosome. Its subcellular location is the centromere. Component of the CENPA-CAD (nucleosome distal) complex, a complex recruited to centromeres which is involved in assembly of kinetochore proteins, mitotic progression and chromosome segregation. May be involved in incorporation of newly synthesized CENPA into centromeres via its interaction with the CENPA-NAC complex. The protein is Centromere protein L (CENPL) of Homo sapiens (Human).